An 89-amino-acid polypeptide reads, in one-letter code: Heat shock protein 30A (89 aa).

Composition is skewed to basic and acidic residues over residues 1 to 11 (MRNNVERRMQR) and 19 to 39 (LSKD…RESE). Positions 1 to 55 (MRNNVERRMQRVNEACRLLSKDTEMRRITDQNRQSRESEGTSPNSGKDGKDHFEL) are disordered. Residues 35-89 (SRESEGTSPNSGKDGKDHFELTLNVRDFSPHELTVKTQGRRVIVTGKHERKSDTE) enclose the sHSP domain.

The protein belongs to the small heat shock protein (HSP20) family.

In Xenopus laevis (African clawed frog), this protein is Heat shock protein 30A (hsp30a).